We begin with the raw amino-acid sequence, 281 residues long: MFHLKRELSQGCALALICLVSLQMQQPAQAEVSSAQGTPLSNLYDNLLQREYAGPVVFPNHQVERKAQRSPSLRLRFGRSDPDMLNSIVEKRWFGDVNQKPIRSPSLRLRFGRRDPSLPQMRRTAYDDLLERELTLNSQQQQQQLGTEPDSDLGADYDGLYERVVRKPQRLRWGRSVPQFEANNADNEQIERSQWYNSLLNSDKMRRMLVALQQQYEIPENVASYANDEDTDTDLNNDTSEFQREVRKPMRLRWGRSTGKAPSEQKHTPEETSSIPPKTQN.

An N-terminal signal peptide occupies residues 1-30 (MFHLKRELSQGCALALICLVSLQMQQPAQA). Residues 31-64 (EVSSAQGTPLSNLYDNLLQREYAGPVVFPNHQVE) constitute a propeptide that is removed on maturation. F77 and F111 each carry phenylalanine amide. The propeptide occupies 115–165 (DPSLPQMRRTAYDDLLERELTLNSQQQQQQLGTEPDSDLGADYDGLYERVV). The disordered stretch occupies residues 137 to 156 (NSQQQQQQLGTEPDSDLGAD). Tryptophan amide is present on W173. The propeptide occupies 176 to 246 (SVPQFEANNA…NDTSEFQREV (71 aa)). Residues 226–281 (ANDEDTDTDLNNDTSEFQREVRKPMRLRWGRSTGKAPSEQKHTPEETSSIPPKTQN) are disordered. W254 carries the post-translational modification Tryptophan amide. The propeptide occupies 257-281 (STGKAPSEQKHTPEETSSIPPKTQN). The segment covering 271-281 (ETSSIPPKTQN) has biased composition (polar residues).

This sequence belongs to the NPY family. As to expression, stage 17 embryos show expression in the two brain hemispheres (neural cells located in the dorsal posterior region), the connected ventral ganglion (pairs of neural cells along the ventral midline) and the peripheral nervous system (expressed in the antennal-maxillary sensory cells). In the brain hemispheres of the feeding third instar larva, expression in neural cells is located in the dorsal-anterior region of the protocerebrum. In the larval ventral ganglion, expression is seen in the neural cells located in the subesophagial region, along the ventral midline and in thoracic and abdominal segments. In the adult brain, expression is seen in the medulla and the mushroom body calyx (at protein level).

The protein resides in the secreted. Its function is as follows. Plays a role in controlling food intake and regulating body size. This chain is Short neuropeptide F (sNPF), found in Drosophila melanogaster (Fruit fly).